The chain runs to 250 residues: MSEDQPHANGAYYRRVLLKLSGEGLLGNKEFGLDLEMVDRVAGEVKAAHDRGIQVCLVIGGGNIFRGISTAAKGMDRTSADYMGMLATVMNALAVQNALEKRGVQTRVQSAIPMSMVCEPYIRRRAIRHMEKGRVVIFAAGTGNPFFTTDTAAALRAVEMNCDAILKATQVDGVYSADPNKVPDAVRFESLTFTDVLTRDLRVMDTSAIALARDNNIPIVVFSLHTPGALADVLDRRGRFTEILCDSHQE.

19 to 22 lines the ATP pocket; that stretch reads KLSG. Gly-61 lines the UMP pocket. ATP contacts are provided by Gly-62 and Arg-66. UMP contacts are provided by residues Asp-81 and 142 to 149; that span reads TGNPFFTT. Residues Thr-169, Gln-170, Tyr-175, and Asp-178 each contribute to the ATP site.

Belongs to the UMP kinase family. Homohexamer.

It localises to the cytoplasm. The catalysed reaction is UMP + ATP = UDP + ADP. Its pathway is pyrimidine metabolism; CTP biosynthesis via de novo pathway; UDP from UMP (UMPK route): step 1/1. With respect to regulation, inhibited by UTP. Its function is as follows. Catalyzes the reversible phosphorylation of UMP to UDP. This is Uridylate kinase from Rhodospirillum rubrum (strain ATCC 11170 / ATH 1.1.1 / DSM 467 / LMG 4362 / NCIMB 8255 / S1).